The primary structure comprises 193 residues: ECF RNA polymerase sigma factor SigK (193 aa).

The tract at residues 35–101 is sigma-70 factor domain-2; sequence LYDRTRSRVY…RRAVDRVRSE (67 aa). A Polymerase core binding motif is present at residues 59–62; that stretch reads ETTQ. The segment at 140-187 is sigma-70 factor domain-4; it reads MGSLSDLQREAIQLAYYEGLTYVQVSERLSANLATIKSRMRGGIRGLK. The segment at residues 161–180 is a DNA-binding region (H-T-H motif); the sequence is YVQVSERLSANLATIKSRMR.

This sequence belongs to the sigma-70 factor family. ECF subfamily. In terms of assembly, interacts transiently with the RNA polymerase catalytic core formed by RpoA, RpoB, RpoC and RpoZ (2 alpha, 1 beta, 1 beta' and 1 omega subunit) to form the RNA polymerase holoenzyme that can initiate transcription. Interacts (via sigma-70 factor domain 4) with anti-sigma-K factor RskA.

Sigma factors are initiation factors that promote the attachment of RNA polymerase to specific initiation sites and are then released. Extracytoplasmic function (ECF) sigma factors are held in an inactive form by an anti-sigma factor until released by regulated intramembrane proteolysis. This chain is ECF RNA polymerase sigma factor SigK (sigK), found in Mycobacterium sp. (strain KMS).